A 1555-amino-acid polypeptide reads, in one-letter code: Probable serine/threonine-protein kinase DDB_G0276181 (1555 aa).

5 disordered regions span residues 1 to 54, 138 to 208, 342 to 452, 486 to 508, and 781 to 850; these read MTSV…NNSF, IIQQ…NSKL, KLKK…DSPF, TTTT…IKPL, and NNIN…NQNT. 4 stretches are compositionally biased toward low complexity: residues 14 to 53, 138 to 205, 359 to 378, and 395 to 431; these read NNSG…NNNS, IIQQ…NNNN, SNIA…KING, and NNSQ…SKKP. The 181-residue stretch at 58-238 folds into the PH domain; it reads QVLHTGYLTK…WIEMIKLAIS (181 aa). Over residues 437-452 the composition is skewed to polar residues; it reads RNISTSDNGSGTDSPF. Low complexity-rich tracts occupy residues 486–504 and 781–832; these read TTTT…TNTN and NNIN…NNNN. The span at 833–850 shows a compositional bias: polar residues; sequence GSGLLSSSPLITISNQNT. The Protein kinase domain maps to 986–1309; it reads VVLHERLGTG…TIIHSISKMI (324 aa). Residue 992 to 1000 coordinates ATP; that stretch reads LGTGATGDI. Residues 1012-1031 form a disordered region; that stretch reads RHISNQDSSGSNSSGSGSGH. An ATP-binding site is contributed by Lys-1061. Asp-1156 functions as the Proton acceptor in the catalytic mechanism. Residues 1340 to 1376 show a composition bias toward low complexity; that stretch reads VQNNNNNSNNNNNNNNNNNNNNSNSNLNNCNNSSPNL. Disordered regions lie at residues 1340-1383 and 1457-1480; these read VQNN…SANN and KKSS…GSSR.

This sequence belongs to the protein kinase superfamily. TKL Ser/Thr protein kinase family.

It catalyses the reaction L-seryl-[protein] + ATP = O-phospho-L-seryl-[protein] + ADP + H(+). The enzyme catalyses L-threonyl-[protein] + ATP = O-phospho-L-threonyl-[protein] + ADP + H(+). This chain is Probable serine/threonine-protein kinase DDB_G0276181, found in Dictyostelium discoideum (Social amoeba).